Reading from the N-terminus, the 216-residue chain is MOB kinase activator 3C (216 aa).

4 residues coordinate Zn(2+): cysteine 82, cysteine 87, histidine 164, and histidine 169.

Belongs to the MOB1/phocein family.

Its function is as follows. May regulate the activity of kinases. In Bos taurus (Bovine), this protein is MOB kinase activator 3C (MOB3C).